A 451-amino-acid chain; its full sequence is Phosphoglucosamine mutase (451 aa).

S107 functions as the Phosphoserine intermediate in the catalytic mechanism. Residues S107, D246, D248, and D250 each contribute to the Mg(2+) site. Position 107 is a phosphoserine (S107).

It belongs to the phosphohexose mutase family. The cofactor is Mg(2+). Activated by phosphorylation.

It catalyses the reaction alpha-D-glucosamine 1-phosphate = D-glucosamine 6-phosphate. In terms of biological role, catalyzes the conversion of glucosamine-6-phosphate to glucosamine-1-phosphate. The sequence is that of Phosphoglucosamine mutase from Burkholderia cenocepacia (strain ATCC BAA-245 / DSM 16553 / LMG 16656 / NCTC 13227 / J2315 / CF5610) (Burkholderia cepacia (strain J2315)).